The chain runs to 428 residues: MSKTLIRGAKVLGGEPQDVLIDGTVVEAVGTNLSAEGAEVVEADGKVLLPGLVDLHTHLREPGREDSETVLTGTRAAASGGYTNVFAMANTFPVADTAGVVEQVWRLGQESGYCDVQPIGAVTVGLEGAKLAELGAMHESAAGVTVFSDDGKCVHDAVIMRRALEYVKAFNGVVAQHAQEPRLTEGAQMNEGVVSAELGLGGWPAVAEESVIARDVLLAEHVGSRVHICHLSTAGSVEIVRWAKSRGIDVTAEVTPHHLLLTDELVRSYNPVYKVNPPLRTERDVMALREALADGTIDIVATDHAPHPHEDKDCEWAAAAMGMVGLETALSVVQETMVDTGLLDWAGVADRMSFKPAKIGQATGHGRPVSAGEPANLTLVDAAYRGQVDPAGFASRSRNTPYEGRELPGRVTHTWLRGKATLVDGKLT.

Zn(2+) contacts are provided by His56 and His58. Residues 58–60 (HLR) and Asn90 contribute to the substrate site. Zn(2+) is bound by residues Asp150, His177, and His230. Substrate is bound at residue Asn276. Residue Asp303 participates in Zn(2+) binding. Asp303 is an active-site residue. Residue His307 coordinates substrate.

Belongs to the metallo-dependent hydrolases superfamily. DHOase family. Class I DHOase subfamily. Zn(2+) serves as cofactor.

The enzyme catalyses (S)-dihydroorotate + H2O = N-carbamoyl-L-aspartate + H(+). The protein operates within pyrimidine metabolism; UMP biosynthesis via de novo pathway; (S)-dihydroorotate from bicarbonate: step 3/3. Catalyzes the reversible cyclization of carbamoyl aspartate to dihydroorotate. The protein is Dihydroorotase of Streptomyces coelicolor (strain ATCC BAA-471 / A3(2) / M145).